Consider the following 73-residue polypeptide: Small ribosomal subunit protein bS18c (73 aa).

This sequence belongs to the bacterial ribosomal protein bS18 family. Part of the 30S ribosomal subunit.

It localises to the plastid. The protein resides in the chloroplast. This is Small ribosomal subunit protein bS18c (rps18) from Guillardia theta (Cryptophyte).